Consider the following 413-residue polypeptide: Inactive squalene synthase 2 (413 aa).

Glycine 2 carries the post-translational modification N-acetylglycine. The next 2 membrane-spanning stretches (helical) occupy residues 283–303 and 390–410; these read AIFQ…ALCY and AIFV…LKAN.

The protein belongs to the phytoene/squalene synthase family. Mg(2+) serves as cofactor. It depends on Mn(2+) as a cofactor. As to expression, mostly expressed in hypocotyls, leaves and cotyledons, and, to a lower extent, in stems.

It is found in the endoplasmic reticulum membrane. The polypeptide is Inactive squalene synthase 2 (Arabidopsis thaliana (Mouse-ear cress)).